We begin with the raw amino-acid sequence, 347 residues long: Selenide, water dikinase (347 aa).

Residue C17 is part of the active site. ATP contacts are provided by residues K20 and 48-50 (TRD). D51 contributes to the Mg(2+) binding site. Residues D68, D91, and 139-141 (GHS) each bind ATP. D91 contacts Mg(2+). D227 provides a ligand contact to Mg(2+).

Belongs to the selenophosphate synthase 1 family. Class I subfamily. Homodimer. It depends on Mg(2+) as a cofactor.

The enzyme catalyses hydrogenselenide + ATP + H2O = selenophosphate + AMP + phosphate + 2 H(+). Functionally, synthesizes selenophosphate from selenide and ATP. This is Selenide, water dikinase from Escherichia coli O157:H7.